A 465-amino-acid chain; its full sequence is UDP-N-acetylmuramoylalanine--D-glutamate ligase (465 aa).

G127–T133 is an ATP binding site.

Belongs to the MurCDEF family.

The protein localises to the cytoplasm. It catalyses the reaction UDP-N-acetyl-alpha-D-muramoyl-L-alanine + D-glutamate + ATP = UDP-N-acetyl-alpha-D-muramoyl-L-alanyl-D-glutamate + ADP + phosphate + H(+). It participates in cell wall biogenesis; peptidoglycan biosynthesis. In terms of biological role, cell wall formation. Catalyzes the addition of glutamate to the nucleotide precursor UDP-N-acetylmuramoyl-L-alanine (UMA). In Cereibacter sphaeroides (strain KD131 / KCTC 12085) (Rhodobacter sphaeroides), this protein is UDP-N-acetylmuramoylalanine--D-glutamate ligase.